Consider the following 338-residue polypeptide: Protein-glutamate methylesterase/protein-glutamine glutaminase 2 (338 aa).

The region spanning 2–119 is the Response regulatory domain; sequence RIGIVNDSAL…SDTKLAAGPL (118 aa). Residue D53 is modified to 4-aspartylphosphate. The region spanning 145 to 330 is the CheB-type methylesterase domain; it reads PTPTAPRLVA…PLQKIAPRLV (186 aa). Catalysis depends on residues S158, H185, and D278.

This sequence belongs to the CheB family. In terms of processing, phosphorylated by CheA. Phosphorylation of the N-terminal regulatory domain activates the methylesterase activity.

The protein localises to the cytoplasm. It catalyses the reaction [protein]-L-glutamate 5-O-methyl ester + H2O = L-glutamyl-[protein] + methanol + H(+). The catalysed reaction is L-glutaminyl-[protein] + H2O = L-glutamyl-[protein] + NH4(+). In terms of biological role, involved in chemotaxis. Part of a chemotaxis signal transduction system that modulates chemotaxis in response to various stimuli. Catalyzes the demethylation of specific methylglutamate residues introduced into the chemoreceptors (methyl-accepting chemotaxis proteins or MCP) by CheR. Also mediates the irreversible deamidation of specific glutamine residues to glutamic acid. This is Protein-glutamate methylesterase/protein-glutamine glutaminase 2 from Cupriavidus metallidurans (strain ATCC 43123 / DSM 2839 / NBRC 102507 / CH34) (Ralstonia metallidurans).